The chain runs to 527 residues: Probable serine/threonine-protein kinase DDB_G0271538 (527 aa).

Positions 1–10 are enriched in basic and acidic residues; it reads MNINFSKDDI. The tract at residues 1–24 is disordered; it reads MNINFSKDDITGLPKSTKEEDEND. In terms of domain architecture, Protein kinase spans 33 to 294; that stretch reads LFMDVEIGRG…KIVVEGLKVL (262 aa). ATP is bound by residues 39 to 47 and K60; that span reads IGRGSFGQV. Catalysis depends on D156, which acts as the Proton acceptor. Disordered regions lie at residues 304 to 375, 422 to 452, and 485 to 527; these read VKGK…ISGS, FTPP…DDVP, and TALD…KKKL. The span at 313 to 324 shows a compositional bias: acidic residues; it reads DPDEDSFIDPND. Residues 325–359 are compositionally biased toward low complexity; sequence DSNNNNNSENNNNNNDNSNENNENNNENNNNSNEN. A compositionally biased stretch (acidic residues) spans 440–452; the sequence is VDEDEDEDEDDVP. Positions 512–527 are enriched in basic residues; that stretch reads PKKKPNNKNKKKKKKL.

It belongs to the protein kinase superfamily. TKL Ser/Thr protein kinase family.

The enzyme catalyses L-seryl-[protein] + ATP = O-phospho-L-seryl-[protein] + ADP + H(+). It catalyses the reaction L-threonyl-[protein] + ATP = O-phospho-L-threonyl-[protein] + ADP + H(+). This is Probable serine/threonine-protein kinase DDB_G0271538 from Dictyostelium discoideum (Social amoeba).